A 109-amino-acid chain; its full sequence is Gliadoralin-A (109 aa).

The first 16 residues, 1–16 (MLVILLMVVVLALSSA), serve as a signal peptide directing secretion. Position 17 is a pyrrolidone carboxylic acid (glutamine 17). The interval 17-109 (QDPNRDFVVS…PRYQQPRRAV (93 aa)) is disordered. A compositionally biased stretch (low complexity) spans 35–109 (PSSQQGTVGG…PRYQQPRRAV (75 aa)). Positions 107–109 (RAV) are excised as a propeptide.

In terms of processing, predominantly proteolytically processed at its C-terminus before secretion to produce the major form gliadoralin A 1-90. Further proteloytically processed after secretion to produce minor forms. Potential substrate of transglutaminase. In terms of tissue distribution, found in saliva (at protein level). Secreted from the submandibular gland.

It localises to the secreted. Its function is as follows. May play a role in the formation of the protective mucosal protein pellicle involved in the reinforcement and protection of oral mucosal epithelial surface. The sequence is that of Gliadoralin-A from Rattus norvegicus (Rat).